A 232-amino-acid chain; its full sequence is Flagellar L-ring protein (232 aa).

An N-terminal signal peptide occupies residues 1 to 21; the sequence is MQKNAAHTYAISSLLVLSLTG. C22 carries N-palmitoyl cysteine lipidation. C22 carries S-diacylglycerol cysteine lipidation.

The protein belongs to the FlgH family. The basal body constitutes a major portion of the flagellar organelle and consists of four rings (L,P,S, and M) mounted on a central rod.

It is found in the cell outer membrane. The protein resides in the bacterial flagellum basal body. Its function is as follows. Assembles around the rod to form the L-ring and probably protects the motor/basal body from shearing forces during rotation. The chain is Flagellar L-ring protein from Shigella boydii serotype 18 (strain CDC 3083-94 / BS512).